Reading from the N-terminus, the 1121-residue chain is MDFQCRTCSQAYDAEQMMKHLSSTRHKTVFDTSNDEDICCEECQDKNIHQLQIIRFGGEDMVLLCNSCFRKEYSETERPSTSYSLQNGSILKFWEKYVKVRECCCDECGEESNLNANRNGEVLCDKCLPKSNRAKDFVSEKSGRFLYIYLGLNETQNSTRKPRKKGGRRVGRGKKGRKGAKIKKEKKETFEAKISRIAYEVKKENSTIQSSSSSNLRNFKGFKAVESDPVVAAKVSKSETSRSNPGPSNRNKGKGNKANHKKNSGNGIGKEKERKTNIRNNVRNSQPIPEDRKNTNSHVTTNSGGKGKNESVDKHQLPQPKALNGNGSGSTNTTGLKKGKKDHAGQKTKGNDKTGNKNPREAKLNSAGRKNALGKKSNNQPNKGTSRWTIGSDTESSREPSISPNENTTSITKSRNRNKKASKPTLNEKSKTTTMPKKLETKNQEKNNGKTKDGKLIYEEGEPLTRYNTFKSTLSYPDLNTYLNDYSFALFLEQKLENEFVQNFNILWPRNEKDTAFIINVEKNNNSELEKLLPANLLALGRPAFNERQPFFFCTQDEQKVWYIFIKELSIQRGKYVLLVELFSWNNLSLPTKNGSSQFKLLPTSAQTSRILFAMTRITNPKFIDLLLGQKPIKEIYFDNRLKFSSDKLNRSQKTAVEHVLNNSITILQGPPGTGKTSTIEEIIIQVIERFHAFPILCVAASNIAIDNIAEKIMENRPQIKILRILSKKKEQQYSDDHPLGEICLHNIVYKNLSPDMQVVANKTRRGEMISKSEDTKFYKEKNRVTNKVVSQSQIIFTTNIAAGGRELKVIKECPVVIMDEATQSSEASTLVPLSLPGIRNFVFVGDEKQLSSFSNIPQLETSLFERVLSNGTYKNPLMLDTQYRMHPKISEFPIKKIYNGELKDGVTDEQKAWPGVQHPLFFYQCDLGPESRVRSTQRDIVGFTYENKHECVEIVKIIQILMLDKKVPLEEIGVITPYSAQRDLLSDILTKNVVINPKQISMQQEYDEIELFNAAGSQGTAGSLQNNVINIINGLHVATVDSFQGHEKSFIIFSCVRNNTENKIGFLRDKRRLNVALTRAKHGLIVVGNKNVLRKGDPLWKDYITYLEEQEVIFTDLTAY.

A disordered region spans residues 157 to 187; that stretch reads NSTRKPRKKGGRRVGRGKKGRKGAKIKKEKK. Residues 160-184 are compositionally biased toward basic residues; the sequence is RKPRKKGGRRVGRGKKGRKGAKIKK. Ser-227 is modified (phosphoserine). Residues 233–452 are disordered; that stretch reads AKVSKSETSR…NQEKNNGKTK (220 aa). The span at 251 to 263 shows a compositional bias: basic residues; that stretch reads NKGKGNKANHKKN. Residues 278–287 are compositionally biased toward polar residues; that stretch reads IRNNVRNSQP. Over residues 307-316 the composition is skewed to basic and acidic residues; sequence GKNESVDKHQ. Over residues 323–336 the composition is skewed to low complexity; it reads LNGNGSGSTNTTGL. Positions 342-363 are enriched in basic and acidic residues; that stretch reads DHAGQKTKGNDKTGNKNPREAK. A compositionally biased stretch (polar residues) spans 376 to 413; the sequence is KSNNQPNKGTSRWTIGSDTESSREPSISPNENTTSITK. Ser-392 is subject to Phosphoserine. Basic and acidic residues predominate over residues 426-452; the sequence is LNEKSKTTTMPKKLETKNQEKNNGKTK. Position 465 is a phosphothreonine (Thr-465). Residue 670 to 677 coordinates ATP; that stretch reads GPPGTGKT.

It belongs to the DNA2/NAM7 helicase family. As to quaternary structure, interacts with the peptidyl release factors SUP35 and weakly with SUP45.

The protein resides in the cytoplasm. The enzyme catalyses ATP + H2O = ADP + phosphate + H(+). Probable RNA helicase, which may be involved in modulation of the translation termination process. Probably unwinds double-stranded RNA. In vitro, unwinds covalently closed, circular DNA in the presence of a DNA topoisomerase TOP1 and replication factor-A protein RFA1. The sequence is that of Putative ATP-dependent RNA helicase ECM32 (ECM32) from Saccharomyces cerevisiae (strain ATCC 204508 / S288c) (Baker's yeast).